The sequence spans 254 residues: Acetylglutamate kinase (254 aa).

Residues 40–41 (GG), Arg62, and Asn158 each bind substrate.

The protein belongs to the acetylglutamate kinase family. ArgB subfamily.

The protein resides in the cytoplasm. The catalysed reaction is N-acetyl-L-glutamate + ATP = N-acetyl-L-glutamyl 5-phosphate + ADP. It participates in amino-acid biosynthesis; L-arginine biosynthesis; N(2)-acetyl-L-ornithine from L-glutamate: step 2/4. Functionally, catalyzes the ATP-dependent phosphorylation of N-acetyl-L-glutamate. This Chloroflexus aggregans (strain MD-66 / DSM 9485) protein is Acetylglutamate kinase.